The sequence spans 466 residues: Delta-1 crystallin (466 aa).

Belongs to the lyase 1 family. Argininosuccinate lyase subfamily. As to quaternary structure, homotetramer. In terms of tissue distribution, eye lens.

Delta crystallin, the principal crystallin in embryonic lens, is found only in birds and reptiles. Despite possessing the necessary catalytic residues, this protein does not function as an enzymatically active argininosuccinate lyase. The chain is Delta-1 crystallin (ASL1) from Anas platyrhynchos (Mallard).